The following is a 367-amino-acid chain: Flagellar P-ring protein (367 aa).

The signal sequence occupies residues 1 to 21 (MYVFKALAGIVLALVATLAHA).

It belongs to the FlgI family. As to quaternary structure, the basal body constitutes a major portion of the flagellar organelle and consists of four rings (L,P,S, and M) mounted on a central rod.

The protein resides in the periplasm. Its subcellular location is the bacterial flagellum basal body. Functionally, assembles around the rod to form the L-ring and probably protects the motor/basal body from shearing forces during rotation. The sequence is that of Flagellar P-ring protein from Salmonella choleraesuis (strain SC-B67).